The primary structure comprises 204 residues: Putative 3-methyladenine DNA glycosylase (204 aa).

This sequence belongs to the DNA glycosylase MPG family.

The polypeptide is Putative 3-methyladenine DNA glycosylase (Bacillus cytotoxicus (strain DSM 22905 / CIP 110041 / 391-98 / NVH 391-98)).